Here is a 213-residue protein sequence, read N- to C-terminus: MSNRKALLGKKLGMSQVWDENGFFVPVTLVDVSTNVVTAVKTEESDGYKAVQLGYGAIDPTKVTKPLAGHFAKAGVTPRRHLVEVRTDDVDQFEAGQELAADLFEEGAEVDVTGTTKGKGFAGTIKRWGFKSYRRTHGSHKNERRPGSVGACATPSRILKGKRMAGRMGHVTATTQNLTVVSADVENGILAIKGAIPGPKGGIVLVRSAVKGA.

Belongs to the universal ribosomal protein uL3 family. As to quaternary structure, part of the 50S ribosomal subunit. Forms a cluster with proteins L14 and L19.

One of the primary rRNA binding proteins, it binds directly near the 3'-end of the 23S rRNA, where it nucleates assembly of the 50S subunit. This Bifidobacterium longum (strain DJO10A) protein is Large ribosomal subunit protein uL3.